A 92-amino-acid chain; its full sequence is Small ribosomal subunit protein uS19c (92 aa).

It belongs to the universal ribosomal protein uS19 family.

The protein resides in the plastid. The protein localises to the chloroplast. Its function is as follows. Protein S19 forms a complex with S13 that binds strongly to the 16S ribosomal RNA. The chain is Small ribosomal subunit protein uS19c from Phaeodactylum tricornutum (strain CCAP 1055/1).